The sequence spans 1481 residues: Cystic fibrosis transmembrane conductance regulator (1481 aa).

Over 1-77 (MQRSPLEKAS…KLINALRRCF (77 aa)) the chain is Cytoplasmic. A helical membrane pass occupies residues 78–98 (FWRFMFYGIILYLGEVTKAVQ). The ABC transmembrane type-1 1 domain maps to 81-365 (FMFYGIILYL…WAVQTWYDSL (285 aa)). Residues 99 to 122 (PLLLGRIIASYDPDNKVERSIAIY) are Extracellular-facing. The helical transmembrane segment at 123-146 (LGIGLCLLFIVRTLLLHPAIFGLH) threads the bilayer. The Cytoplasmic segment spans residues 147 to 195 (HIGMQMRIAMFSLIYKKTLKLSSRVLDKISIGQLVSLLSNNLNKFDEGL). Residues 196–216 (ALAHFVWIAPLQVTLLMGLLW) traverse the membrane as a helical segment. Over 217 to 222 (DLLQAF) the chain is Extracellular. A helical membrane pass occupies residues 223–243 (TFCGLAFLVVLALLQAGLGKM). The Cytoplasmic portion of the chain corresponds to 244 to 298 (MMKYRDQRAGKINERLVITSEMIENIQSVKAYCWEEAMEKIIENLRQTELKLTRK). A helical membrane pass occupies residues 299 to 319 (AAYVRYLNSSAFFFSGFFVVF). The Extracellular portion of the chain corresponds to 320–339 (LSVLPYALLKGIILRKIFTT). The helical transmembrane segment at 340-358 (ISFCIVLRMAVTRQFPWAV) threads the bilayer. The Cytoplasmic portion of the chain corresponds to 359 to 858 (QTWYDSLGAI…YLRYITVHKS (500 aa)). ATP-binding positions include tryptophan 401, 457 to 464 (GSTGAGKT), and glutamine 492. Residues 421–645 (ISNCDTSLFF…RPDFSSKLMG (225 aa)) enclose the ABC transporter 1 domain. Cysteine 523 carries S-palmitoyl cysteine lipidation. Phosphoserine is present on residues serine 548 and serine 659. The disordered R region stretch occupies residues 653–831 (TAERRNSIIT…EEINEEDLRD (179 aa)). Residue serine 669 is modified to Phosphoserine; by PKA. Serine 685 carries the phosphoserine modification. Residue lysine 687 forms a Glycyl lysine isopeptide (Lys-Gly) (interchain with G-Cter in ubiquitin) linkage. A phosphoserine mark is found at serine 699 and serine 711. Position 716 is a phosphothreonine (threonine 716). Serine 736, serine 767, serine 790, serine 795, and serine 813 each carry phosphoserine. Residues 859 to 879 (LMFVLIWCLVVFLVEVAASLV) traverse the membrane as a helical segment. An ABC transmembrane type-1 2 domain is found at 859–1155 (LMFVLIWCLV…AVNSSIDVDS (297 aa)). At 880 to 918 (VLCLFPKILLQDKGNSTKNASNSYAVIITSTSSYYIFYI) the chain is on the extracellular side. N-linked (GlcNAc...) asparagine glycans are attached at residues asparagine 894 and asparagine 898. Residues 919-939 (YVGVADTLLALGLFRGLPLVH) form a discontinuously helical membrane-spanning segment. At 940–990 (TLITVSKTLHHKMLQSVLQAPMSTLNTLKTGGILNRFSKDIAVLDDLLPLT) the chain is on the cytoplasmic side. Residues 991–1011 (IFDFIQLLLIVIGAVVVVSVL) form a helical membrane-spanning segment. Residues 1012–1013 (QP) lie on the Extracellular side of the membrane. Residues 1014–1034 (YIFLATVPVIAAFILLRGYFL) form a helical membrane-spanning segment. At 1035–1095 (HTSQQLKQLE…TANWFLYLST (61 aa)) the chain is on the cytoplasmic side. A helical membrane pass occupies residues 1096-1116 (LRWFQMRIEMIFVIFFIAVTF). Residues 1117 to 1130 (ISILTTGEGEGRVG) are Extracellular-facing. A helical membrane pass occupies residues 1131–1151 (IILTLAMNIMGTLQWAVNSSI). Topologically, residues 1152–1481 (DVDSLMRSVS…TEEEVQETKL (330 aa)) are cytoplasmic. In terms of domain architecture, ABC transporter 2 spans 1211–1444 (MTVKDLTAKY…KSLFRQAISP (234 aa)). Residues tyrosine 1220 and 1245–1252 (GRTGSGKS) each bind ATP. Positions 1387 to 1481 (RTLKQAFADC…TEEEVQETKL (95 aa)) are interaction with GORASP2. Cysteine 1396 carries S-palmitoyl cysteine lipidation. At serine 1457 the chain carries Phosphoserine. The PDZ-binding signature appears at 1479 to 1481 (TKL).

This sequence belongs to the ABC transporter superfamily. ABCC family. CFTR transporter (TC 3.A.1.202) subfamily. In terms of assembly, monomer; does not require oligomerization for channel activity. May form oligomers in the membrane. Interacts with SLC26A3, SLC26A6 and NHERF1. Interacts with SHANK2. Interacts with MYO6. Interacts (via C-terminus) with GOPC (via PDZ domain); this promotes CFTR internalization and thereby decreases channel activity. Interacts with SLC4A7 through NHERF1. Found in a complex with MYO5B and RAB11A. Interacts with ANO1. Interacts with SLC26A8. Interacts with AHCYL1; the interaction increases CFTR activity. Interacts with CSE1L. The core-glycosylated form interacts with GORASP2 (via PDZ GRASP-type 1 domain) in respone to ER stress. Interacts with MARCHF2; the interaction leads to CFTR ubiqtuitination and degradation. Interacts with ADGRG2. N-glycosylated. Post-translationally, phosphorylated; cAMP treatment promotes phosphorylation and activates the channel. Dephosphorylation decreases the ATPase activity (in vitro). Phosphorylation at PKA sites activates the channel. Phosphorylation at PKC sites enhances the response to phosphorylation by PKA. Phosphorylated by AMPK; this inhibits channel activity. In terms of processing, ubiquitinated, leading to its degradation in the lysosome. Deubiquitination by USP10 in early endosomes enhances its endocytic recycling to the cell membrane. Ubiquitinated by RNF185 during ER stress. Ubiquitinated by MARCHF2.

Its subcellular location is the apical cell membrane. The protein resides in the early endosome membrane. It localises to the cell membrane. It is found in the recycling endosome membrane. The protein localises to the endoplasmic reticulum membrane. Its subcellular location is the nucleus. It carries out the reaction ATP + H2O + closed Cl(-) channel = ADP + phosphate + open Cl(-) channel.. The enzyme catalyses chloride(in) = chloride(out). It catalyses the reaction hydrogencarbonate(in) = hydrogencarbonate(out). The catalysed reaction is ATP + H2O = ADP + phosphate + H(+). Functionally, epithelial ion channel that plays an important role in the regulation of epithelial ion and water transport and fluid homeostasis. Mediates the transport of chloride ions across the cell membrane. Possesses an intrinsic ATPase activity and utilizes ATP to gate its channel; the passive flow of anions through the channel is gated by cycles of ATP binding and hydrolysis by the ATP-binding domains. The ion channel is also permeable to HCO(3)(-); selectivity depends on the extracellular chloride concentration. Exerts its function also by modulating the activity of other ion channels and transporters. Contributes to the regulation of the pH and the ion content of the epithelial fluid layer. Modulates the activity of the epithelial sodium channel (ENaC) complex, in part by regulating the cell surface expression of the ENaC complex. May regulate bicarbonate secretion and salvage in epithelial cells by regulating the transporter SLC4A7. Can inhibit the chloride channel activity of ANO1. Plays a role in the chloride and bicarbonate homeostasis during sperm epididymal maturation and capacitation. The sequence is that of Cystic fibrosis transmembrane conductance regulator from Ovis aries (Sheep).